The sequence spans 321 residues: Epoxyqueuosine reductase (321 aa).

The Proton donor role is filled by Asp137. In terms of domain architecture, 4Fe-4S ferredoxin-type spans 179–211 (EPLNADPPARSLCGRCSACIDACPTHAIREPFV). The [4Fe-4S] cluster site is built by Cys191, Cys194, Cys197, Cys201, Cys217, Cys245, Cys248, and Cys252.

This sequence belongs to the QueG family. As to quaternary structure, monomer. It depends on cob(II)alamin as a cofactor. [4Fe-4S] cluster serves as cofactor.

The protein resides in the cytoplasm. The catalysed reaction is epoxyqueuosine(34) in tRNA + AH2 = queuosine(34) in tRNA + A + H2O. It participates in tRNA modification; tRNA-queuosine biosynthesis. Catalyzes the conversion of epoxyqueuosine (oQ) to queuosine (Q), which is a hypermodified base found in the wobble positions of tRNA(Asp), tRNA(Asn), tRNA(His) and tRNA(Tyr). In Synechococcus sp. (strain CC9605), this protein is Epoxyqueuosine reductase.